Here is a 492-residue protein sequence, read N- to C-terminus: Ketol-acid reductoisomerase (NADP(+)) (492 aa).

The 195-residue stretch at 14-208 (LDQLGKCRFM…GGHRAGVLQS (195 aa)) folds into the KARI N-terminal Rossmann domain. NADP(+)-binding positions include 45-48 (CGAQ), Arg68, Arg76, Ser78, and 108-110 (DKQ). The active site involves His132. NADP(+) is bound at residue Gly158. 2 consecutive KARI C-terminal knotted domains span residues 209-344 (SFVA…NAPQ) and 345-485 (FDGK…MKDM). Residues Asp217, Glu221, Glu389, and Glu393 each coordinate Mg(2+). Residue Ser414 participates in substrate binding.

It belongs to the ketol-acid reductoisomerase family. Mg(2+) serves as cofactor.

The catalysed reaction is (2R)-2,3-dihydroxy-3-methylbutanoate + NADP(+) = (2S)-2-acetolactate + NADPH + H(+). It catalyses the reaction (2R,3R)-2,3-dihydroxy-3-methylpentanoate + NADP(+) = (S)-2-ethyl-2-hydroxy-3-oxobutanoate + NADPH + H(+). Its pathway is amino-acid biosynthesis; L-isoleucine biosynthesis; L-isoleucine from 2-oxobutanoate: step 2/4. It functions in the pathway amino-acid biosynthesis; L-valine biosynthesis; L-valine from pyruvate: step 2/4. In terms of biological role, involved in the biosynthesis of branched-chain amino acids (BCAA). Catalyzes an alkyl-migration followed by a ketol-acid reduction of (S)-2-acetolactate (S2AL) to yield (R)-2,3-dihydroxy-isovalerate. In the isomerase reaction, S2AL is rearranged via a Mg-dependent methyl migration to produce 3-hydroxy-3-methyl-2-ketobutyrate (HMKB). In the reductase reaction, this 2-ketoacid undergoes a metal-dependent reduction by NADPH to yield (R)-2,3-dihydroxy-isovalerate. The polypeptide is Ketol-acid reductoisomerase (NADP(+)) (Pectobacterium atrosepticum (strain SCRI 1043 / ATCC BAA-672) (Erwinia carotovora subsp. atroseptica)).